The chain runs to 309 residues: Ribonuclease Z (309 aa).

Zn(2+) contacts are provided by H63, H65, D67, H68, H145, D216, and H274. The Proton acceptor role is filled by D67.

This sequence belongs to the RNase Z family. As to quaternary structure, homodimer. The cofactor is Zn(2+).

The enzyme catalyses Endonucleolytic cleavage of RNA, removing extra 3' nucleotides from tRNA precursor, generating 3' termini of tRNAs. A 3'-hydroxy group is left at the tRNA terminus and a 5'-phosphoryl group is left at the trailer molecule.. Zinc phosphodiesterase, which displays some tRNA 3'-processing endonuclease activity. Probably involved in tRNA maturation, by removing a 3'-trailer from precursor tRNA. This is Ribonuclease Z from Streptococcus equi subsp. zooepidemicus (strain H70).